The sequence spans 557 residues: MELRTRGWWLLCAAAALVVCARGDPASKSRSCSEVRQIYGAKGFSLSDVPQAEISGEHLRICPQGYTCCTSEMEENLANHSRMELESALHDSSRALQATLATQLHGIDDHFQRLLNDSERTLQEAFPGAFGDLYTQNTRAFRDLYAELRLYYRGANLHLEETLAEFWARLLERLFKQLHPQLLPDDYLDCLGKQAEALRPFGDAPRELRLRATRAFVAARSFVQGLGVASDVVRKVAQVPLAPECSRAIMKLVYCAHCRGVPGARPCPDYCRNVLKGCLANQADLDAEWRNLLDSMVLITDKFWGPSGAESVIGGVHVWLAEAINALQDNKDTLTAKVIQACGNPKVNPHGSGPEEKRRRGKLALQEKPSTGTLEKLVSEAKAQLRDIQDFWISLPGTLCSEKMAMSPASDDRCWNGISKGRYLPEVMGDGLANQINNPEVEVDITKPDMTIRQQIMQLKIMTNRLRGAYGGNDVDFQDASDDGSGSGSGGGCPDDTCGRRVSKKSSSSRTPLTHALPGLSEQEGQKTSAATCPEPHSFFLLFLVTLVLAAARPRWR.

The N-terminal stretch at 1-23 (MELRTRGWWLLCAAAALVVCARG) is a signal peptide. 7 disulfides stabilise this stretch: Cys32-Cys68, Cys62-Cys255, Cys69-Cys258, Cys190-Cys342, Cys245-Cys278, Cys267-Cys414, and Cys271-Cys400. Residues Asn79 and Asn116 are each glycosylated (N-linked (GlcNAc...) asparagine). The tract at residues 477 to 531 (FQDASDDGSGSGSGGGCPDDTCGRRVSKKSSSSRTPLTHALPGLSEQEGQKTSAA) is disordered. 3 O-linked (Xyl...) (heparan sulfate) serine glycosylation sites follow: Ser485, Ser487, and Ser489. Ser529 carries GPI-anchor amidated serine lipidation. A propeptide spans 530–557 (AATCPEPHSFFLLFLVTLVLAAARPRWR) (removed in mature form).

It belongs to the glypican family. In terms of processing, S-nitrosylated in a Cu(2+)-dependent manner. Nitric acid (NO) is released from the nitrosylated cysteines by ascorbate or by some other reducing agent, in a Cu(2+) or Zn(2+) dependent manner. This free nitric oxide is then capable of cleaving the heparan sulfate side chains. Post-translationally, N- and O-glycosylated. N-glycosylation is mainly of the complex type containing sialic acid. O-glycosylated with heparan sulfate. The heparan sulfate chains can be cleaved either by the action of heparanase or, degraded by a deaminative process that uses nitric oxide (NO) released from the S-nitrosylated cysteines. This process is triggered by ascorbate, or by some other reducing agent, in a Cu(2+)- or Zn(2+) dependent manner. Cu(2+) ions are provided by ceruloproteins such as APP, PRNP or CP which associate with GCP1 in intracellular compartments or lipid rafts. This cell-associated glypican is further processed to give rise to a medium-released species.

The protein localises to the cell membrane. The protein resides in the endosome. It localises to the secreted. Its subcellular location is the extracellular space. In terms of biological role, cell surface proteoglycan that bears heparan sulfate. Binds, via the heparan sulfate side chains, alpha-4 (V) collagen and participates in Schwann cell myelination. May act as a catalyst in increasing the rate of conversion of prion protein PRPN(C) to PRNP(Sc) via associating (via the heparan sulfate side chains) with both forms of PRPN, targeting them to lipid rafts and facilitating their interaction. Required for proper skeletal muscle differentiation by sequestering FGF2 in lipid rafts preventing its binding to receptors (FGFRs) and inhibiting the FGF-mediated signaling. Binds Cu(2+) or Zn(2+) ions. This is Glypican-1 (Gpc1) from Mus musculus (Mouse).